Consider the following 662-residue polypeptide: Primary amine oxidase 2 (662 aa).

A signal peptide spans 1–22 (MSQLLLFTILVFSSVFVIGSLS). Asn-154 is a glycosylation site (N-linked (GlcNAc...) asparagine). 321-332 (FFDCGEFGCGQY) is a substrate binding site. Asp-323 acts as the Proton acceptor in catalysis. A disulfide bridge links Cys-342 with Cys-368. Residue 405–410 (VGNYDY) participates in substrate binding. Catalysis depends on Tyr-408, which acts as the Schiff-base intermediate with substrate; via topaquinone. Tyr-408 is subject to 2',4',5'-topaquinone. Residues His-464 and His-466 each coordinate Cu cation. 2 residues coordinate Mn(2+): Asp-473 and Asp-475. A glycan (N-linked (GlcNAc...) asparagine) is linked at Asn-568. Mn(2+) contacts are provided by Asp-602 and Ile-603. His-613 serves as a coordination point for Cu cation.

It belongs to the copper/topaquinone oxidase family. As to quaternary structure, homodimer. Cu cation serves as cofactor. Requires Mn(2+) as cofactor. The cofactor is L-topaquinone. In terms of processing, topaquinone (TPQ) is generated by copper-dependent autoxidation of a specific tyrosyl residue.

The enzyme catalyses a primary methyl amine + O2 + H2O = an aldehyde + H2O2 + NH4(+). The polypeptide is Primary amine oxidase 2 (Arabidopsis thaliana (Mouse-ear cress)).